Here is a 1394-residue protein sequence, read N- to C-terminus: Kinesin-like protein KIF27 (1394 aa).

The 337-residue stretch at 5-341 (PIKVAVRIRP…LKYANRARNI (337 aa)) folds into the Kinesin motor domain. An ATP-binding site is contributed by 84 to 91 (GQTGSGKT). Coiled-coil stretches lie at residues 352–418 (QADR…IEQA) and 498–554 (QKDL…ELAK). Disordered regions lie at residues 559–582 (VPTS…RPHT) and 642–665 (FSDN…RSHS). Over residues 571–580 (PDARASEKRP) the composition is skewed to basic and acidic residues. Phosphoserine is present on residues S643, S646, S672, S675, and S704. 4 coiled-coil regions span residues 709–891 (LQKL…GQGE), 921–1078 (LDEQ…SIQS), 1118–1152 (NKVI…HELE), and 1186–1226 (DQDG…RLKD). The disordered stretch occupies residues 886–916 (KAGQGEGLNPKAEDQDGFNLNRRKSPFRSGD). Phosphoserine is present on S999. A compositionally biased stretch (basic and acidic residues) spans 1267–1280 (TENTKLNGSEREVD). Disordered stretches follow at residues 1267–1319 (TENT…LQSI) and 1325–1344 (ARPF…PVRS). 2 stretches are compositionally biased toward polar residues: residues 1281–1295 (NSSS…TQQI) and 1309–1319 (IAPSSGQLQSI). Residues S1365 and S1387 each carry the phosphoserine modification.

The protein belongs to the TRAFAC class myosin-kinesin ATPase superfamily. Kinesin family. KIF27 subfamily. In terms of assembly, interacts with STK36.

It localises to the cytoplasm. The protein resides in the cytoskeleton. The protein localises to the cell projection. It is found in the cilium. Functionally, plays an essential role in motile ciliogenesis. This Mus musculus (Mouse) protein is Kinesin-like protein KIF27 (Kif27).